The following is a 300-amino-acid chain: Probable ABC transporter permease protein YurM (300 aa).

6 helical membrane-spanning segments follow: residues 37 to 57, 98 to 118, 129 to 149, 161 to 181, 204 to 224, and 264 to 284; these read VWVF…WMVM, VIVT…AAYG, FFLV…LVPL, TYWA…IILI, FGVF…TSGI, and WGVL…LFLL. The 192-residue stretch at 94–285 folds into the ABC transmembrane type-1 domain; that stretch reads FMNSVIVTAL…APIIILFLLM (192 aa).

Belongs to the binding-protein-dependent transport system permease family. MalFG subfamily.

Its subcellular location is the cell membrane. In terms of biological role, probably part of the binding-protein-dependent transport system YurMNO. Probably responsible for the translocation of the substrate across the membrane. This chain is Probable ABC transporter permease protein YurM (yurM), found in Bacillus subtilis (strain 168).